Consider the following 403-residue polypeptide: Na(+)-translocating NADH-quinone reductase subunit B (403 aa).

The next 9 helical transmembrane spans lie at 56-76 (MMIIVWLCTFPAMFFGMYNVG), 121-141 (AYFLPVYLTTFIVGGFWEVLF), 164-184 (LPPSVPLWQVALGISFGVVLG), 225-245 (GFAGATSLSLAAAGGVDNILG), 260-280 (GSMGETSTLAIFIGGAVLLLT), 287-307 (IVAGVMLGMIAMSYLFNAIGS), 312-332 (MFAMPWYWHLVTGGFAFGMIF), 348-368 (WLFGALIGVMVMLIRVVNPAF), and 371-391 (GMMLAILFANLFAPLIDHFVV). The residue at position 230 (T230) is an FMN phosphoryl threonine.

It belongs to the NqrB/RnfD family. Composed of six subunits; NqrA, NqrB, NqrC, NqrD, NqrE and NqrF. FMN is required as a cofactor.

The protein resides in the cell inner membrane. The catalysed reaction is a ubiquinone + n Na(+)(in) + NADH + H(+) = a ubiquinol + n Na(+)(out) + NAD(+). In terms of biological role, NQR complex catalyzes the reduction of ubiquinone-1 to ubiquinol by two successive reactions, coupled with the transport of Na(+) ions from the cytoplasm to the periplasm. NqrA to NqrE are probably involved in the second step, the conversion of ubisemiquinone to ubiquinol. The sequence is that of Na(+)-translocating NADH-quinone reductase subunit B from Pseudomonas paraeruginosa (strain DSM 24068 / PA7) (Pseudomonas aeruginosa (strain PA7)).